The sequence spans 263 residues: Hydroxyethylthiazole kinase (263 aa).

Substrate is bound at residue Met41. Positions 117 and 163 each coordinate ATP. Gly190 is a substrate binding site.

This sequence belongs to the Thz kinase family. Mg(2+) is required as a cofactor.

It carries out the reaction 5-(2-hydroxyethyl)-4-methylthiazole + ATP = 4-methyl-5-(2-phosphooxyethyl)-thiazole + ADP + H(+). It functions in the pathway cofactor biosynthesis; thiamine diphosphate biosynthesis; 4-methyl-5-(2-phosphoethyl)-thiazole from 5-(2-hydroxyethyl)-4-methylthiazole: step 1/1. Catalyzes the phosphorylation of the hydroxyl group of 4-methyl-5-beta-hydroxyethylthiazole (THZ). The protein is Hydroxyethylthiazole kinase of Exiguobacterium sp. (strain ATCC BAA-1283 / AT1b).